The following is a 130-amino-acid chain: Holo-[acyl-carrier-protein] synthase (130 aa).

Positions 9 and 58 each coordinate Mg(2+).

The protein belongs to the P-Pant transferase superfamily. AcpS family. The cofactor is Mg(2+).

The protein resides in the cytoplasm. The catalysed reaction is apo-[ACP] + CoA = holo-[ACP] + adenosine 3',5'-bisphosphate + H(+). Functionally, transfers the 4'-phosphopantetheine moiety from coenzyme A to a Ser of acyl-carrier-protein. This chain is Holo-[acyl-carrier-protein] synthase, found in Mycobacterium sp. (strain JLS).